The sequence spans 1069 residues: Acyl-CoA dehydrogenase family member 10 (1069 aa).

K413 carries the post-translational modification N6-succinyllysine. K427 carries the N6-acetyllysine; alternate modification. K427 carries the N6-succinyllysine; alternate modification. Residues 792–802, S828, R943, Q1013, and E1044 contribute to the FAD site; that span reads FAMTEPQVASS. Position 1052 is an N6-acetyllysine; alternate (K1052). K1052 is modified (N6-succinyllysine; alternate).

This sequence belongs to the acyl-CoA dehydrogenase family. The cofactor is FAD.

It catalyses the reaction a 2,3-saturated acyl-CoA + A = a 2,3-dehydroacyl-CoA + AH2. Functionally, acyl-CoA dehydrogenase only active with R- and S-2-methyl-C15-CoA. The sequence is that of Acyl-CoA dehydrogenase family member 10 (Acad10) from Mus musculus (Mouse).